The sequence spans 95 residues: Co-chaperonin GroES (95 aa).

The protein belongs to the GroES chaperonin family. In terms of assembly, heptamer of 7 subunits arranged in a ring. Interacts with the chaperonin GroEL.

It is found in the cytoplasm. Functionally, together with the chaperonin GroEL, plays an essential role in assisting protein folding. The GroEL-GroES system forms a nano-cage that allows encapsulation of the non-native substrate proteins and provides a physical environment optimized to promote and accelerate protein folding. GroES binds to the apical surface of the GroEL ring, thereby capping the opening of the GroEL channel. This Streptococcus equi subsp. equi (strain 4047) protein is Co-chaperonin GroES.